Here is a 103-residue protein sequence, read N- to C-terminus: UPF0145 protein BC_5181 (103 aa).

Belongs to the UPF0145 family.

This chain is UPF0145 protein BC_5181, found in Bacillus cereus (strain ATCC 14579 / DSM 31 / CCUG 7414 / JCM 2152 / NBRC 15305 / NCIMB 9373 / NCTC 2599 / NRRL B-3711).